The sequence spans 386 residues: Patatin-07 (386 aa).

Residues 1 to 23 (MATTKSFLILFFMILATTSSTCA) form the signal peptide. The PNPLA domain occupies 32–229 (LSIDGGGIKG…TVADPALLSV (198 aa)). Positions 36–41 (GGGIKG) match the GXGXXG motif. The GXSXG motif lies at 75 to 79 (GTSTG). The active-site Nucleophile is the Ser-77. 2 N-linked (GlcNAc...) asparagine glycosylation sites follow: Asn-115 and Asn-202. Asp-215 functions as the Proton acceptor in the catalytic mechanism. The DGA/G signature appears at 215–217 (DGA).

It belongs to the patatin family. As to expression, tuber.

Its subcellular location is the vacuole. In terms of biological role, probable lipolytic acyl hydrolase (LAH), an activity which is thought to be involved in the response of tubers to pathogens. This chain is Patatin-07, found in Solanum tuberosum (Potato).